The primary structure comprises 372 residues: Histidinol-phosphate aminotransferase (372 aa).

K234 bears the N6-(pyridoxal phosphate)lysine mark.

Belongs to the class-II pyridoxal-phosphate-dependent aminotransferase family. Histidinol-phosphate aminotransferase subfamily. As to quaternary structure, homodimer. Pyridoxal 5'-phosphate serves as cofactor.

It catalyses the reaction L-histidinol phosphate + 2-oxoglutarate = 3-(imidazol-4-yl)-2-oxopropyl phosphate + L-glutamate. Its pathway is amino-acid biosynthesis; L-histidine biosynthesis; L-histidine from 5-phospho-alpha-D-ribose 1-diphosphate: step 7/9. In Corynebacterium efficiens (strain DSM 44549 / YS-314 / AJ 12310 / JCM 11189 / NBRC 100395), this protein is Histidinol-phosphate aminotransferase (hisC).